The following is a 346-amino-acid chain: DNA primase small subunit PriS (346 aa).

Catalysis depends on residues Asp97, Asp99, and Asp280.

It belongs to the eukaryotic-type primase small subunit family. In terms of assembly, heterodimer of a small subunit (PriS) and a large subunit (PriL). It depends on Mg(2+) as a cofactor. Requires Mn(2+) as cofactor.

Its function is as follows. Catalytic subunit of DNA primase, an RNA polymerase that catalyzes the synthesis of short RNA molecules used as primers for DNA polymerase during DNA replication. The small subunit contains the primase catalytic core and has DNA synthesis activity on its own. Binding to the large subunit stabilizes and modulates the activity, increasing the rate of DNA synthesis while decreasing the length of the DNA fragments, and conferring RNA synthesis capability. The DNA polymerase activity may enable DNA primase to also catalyze primer extension after primer synthesis. May also play a role in DNA repair. This chain is DNA primase small subunit PriS, found in Thermococcus kodakarensis (strain ATCC BAA-918 / JCM 12380 / KOD1) (Pyrococcus kodakaraensis (strain KOD1)).